Here is a 229-residue protein sequence, read N- to C-terminus: Potassium/proton antiporter CemA (229 aa).

4 helical membrane-spanning segments follow: residues 7 to 27 (FIPF…YLSF), 106 to 126 (MILH…YSIL), 154 to 174 (ILLV…ELLI), and 189 to 209 (IISS…KYWI).

Belongs to the CemA family.

It localises to the plastid. The protein localises to the chloroplast inner membrane. It catalyses the reaction K(+)(in) + H(+)(out) = K(+)(out) + H(+)(in). Contributes to K(+)/H(+) antiport activity by supporting proton efflux to control proton extrusion and homeostasis in chloroplasts in a light-dependent manner to modulate photosynthesis. Prevents excessive induction of non-photochemical quenching (NPQ) under continuous-light conditions. Indirectly promotes efficient inorganic carbon uptake into chloroplasts. The polypeptide is Potassium/proton antiporter CemA (Spinacia oleracea (Spinach)).